The chain runs to 121 residues: Small ribosomal subunit protein uS13 (121 aa).

The tract at residues 94-121 (GLPVRGQSSKTNARTVKGPRKTVANKKK) is disordered. The span at 110–121 (KGPRKTVANKKK) shows a compositional bias: basic residues.

It belongs to the universal ribosomal protein uS13 family. In terms of assembly, part of the 30S ribosomal subunit. Forms a loose heterodimer with protein S19. Forms two bridges to the 50S subunit in the 70S ribosome.

In terms of biological role, located at the top of the head of the 30S subunit, it contacts several helices of the 16S rRNA. In the 70S ribosome it contacts the 23S rRNA (bridge B1a) and protein L5 of the 50S subunit (bridge B1b), connecting the 2 subunits; these bridges are implicated in subunit movement. Contacts the tRNAs in the A and P-sites. This chain is Small ribosomal subunit protein uS13, found in Mesoplasma florum (strain ATCC 33453 / NBRC 100688 / NCTC 11704 / L1) (Acholeplasma florum).